A 213-amino-acid chain; its full sequence is Adenylate kinase (213 aa).

10–15 (GAGKGT) lines the ATP pocket. Residues 30-59 (STGNLLRDEVKSKTDLGVDIEKLISNGKFV) form an NMP region. AMP-binding positions include Thr31, Arg36, 57–59 (KFV), 85–88 (GYPR), and Gln92. The segment at 126–162 (GRMTCEKCNMTLNEYFNKEQIELHPCGVEHLKKRKDD) is LID. ATP is bound at residue Arg127. 2 residues coordinate AMP: Arg159 and Arg170. Gly198 is a binding site for ATP.

It belongs to the adenylate kinase family. Monomer.

It is found in the cytoplasm. The enzyme catalyses AMP + ATP = 2 ADP. The protein operates within purine metabolism; AMP biosynthesis via salvage pathway; AMP from ADP: step 1/1. Catalyzes the reversible transfer of the terminal phosphate group between ATP and AMP. Plays an important role in cellular energy homeostasis and in adenine nucleotide metabolism. The polypeptide is Adenylate kinase (Pelagibacter ubique (strain HTCC1062)).